Reading from the N-terminus, the 211-residue chain is Molybdenum cofactor guanylyltransferase (211 aa).

Residues 12 to 14 (LAG), K25, N53, D71, and D101 contribute to the GTP site. D101 contributes to the Mg(2+) binding site.

The protein belongs to the MobA family. In terms of assembly, monomer. The cofactor is Mg(2+).

Its subcellular location is the cytoplasm. The enzyme catalyses Mo-molybdopterin + GTP + H(+) = Mo-molybdopterin guanine dinucleotide + diphosphate. Its function is as follows. Transfers a GMP moiety from GTP to Mo-molybdopterin (Mo-MPT) cofactor (Moco or molybdenum cofactor) to form Mo-molybdopterin guanine dinucleotide (Mo-MGD) cofactor. This is Molybdenum cofactor guanylyltransferase from Acidovorax sp. (strain JS42).